Consider the following 335-residue polypeptide: 3-isopropylmalate dehydrogenase (335 aa).

Residues Arg87, Arg97, Arg121, and Asp211 each contribute to the substrate site. The Mg(2+) site is built by Asp211, Asp235, and Asp239. 271 to 283 (GSAPDIAGQSKAD) serves as a coordination point for NAD(+).

This sequence belongs to the isocitrate and isopropylmalate dehydrogenases family. LeuB type 2 subfamily. In terms of assembly, homodimer. Mg(2+) is required as a cofactor. It depends on Mn(2+) as a cofactor.

The protein resides in the cytoplasm. It carries out the reaction (2R,3S)-3-isopropylmalate + NAD(+) = 4-methyl-2-oxopentanoate + CO2 + NADH. It participates in amino-acid biosynthesis; L-leucine biosynthesis; L-leucine from 3-methyl-2-oxobutanoate: step 3/4. In terms of biological role, catalyzes the oxidation of 3-carboxy-2-hydroxy-4-methylpentanoate (3-isopropylmalate) to 3-carboxy-4-methyl-2-oxopentanoate. The product decarboxylates to 4-methyl-2 oxopentanoate. The protein is 3-isopropylmalate dehydrogenase of Nocardia farcinica (strain IFM 10152).